A 132-amino-acid chain; its full sequence is tRNA (cytidine(56)-2'-O)-methyltransferase (132 aa).

Residues Leu-35, 65 to 69 (GSEKV), and 83 to 90 (IGNQPHSE) each bind S-adenosyl-L-methionine.

It belongs to the aTrm56 family. As to quaternary structure, homodimer.

Its subcellular location is the cytoplasm. The catalysed reaction is cytidine(56) in tRNA + S-adenosyl-L-methionine = 2'-O-methylcytidine(56) in tRNA + S-adenosyl-L-homocysteine + H(+). Functionally, specifically catalyzes the AdoMet-dependent 2'-O-ribose methylation of cytidine at position 56 in tRNAs. This is tRNA (cytidine(56)-2'-O)-methyltransferase from Sulfolobus acidocaldarius (strain ATCC 33909 / DSM 639 / JCM 8929 / NBRC 15157 / NCIMB 11770).